Consider the following 194-residue polypeptide: 7-methyl-GTP pyrophosphatase (194 aa).

The active-site Proton acceptor is the Asp69.

The protein belongs to the Maf family. YceF subfamily. Requires a divalent metal cation as cofactor.

The protein resides in the cytoplasm. It catalyses the reaction N(7)-methyl-GTP + H2O = N(7)-methyl-GMP + diphosphate + H(+). Its function is as follows. Nucleoside triphosphate pyrophosphatase that hydrolyzes 7-methyl-GTP (m(7)GTP). May have a dual role in cell division arrest and in preventing the incorporation of modified nucleotides into cellular nucleic acids. The sequence is that of 7-methyl-GTP pyrophosphatase from Sodalis glossinidius (strain morsitans).